Reading from the N-terminus, the 279-residue chain is Protein PHOTOPERIODIC CONTROL OF HYPOCOTYL 1-LIKE (279 aa).

In terms of assembly, interacts with light-activated phyB. Binds directly to PIF1 and COP1. Ubiquitinated by COP1 in darkness; this leads to proteasomal degradation. In terms of tissue distribution, mainly expressed in cotyledons, hypocotyls, leaves.

The protein resides in the nucleus. Functionally, together with PCH1, regulates growth and development adaptation to the ambient environment by controlling negatively phytochrome B (phyB) dark reversion, a temperature-dependent thermal relaxation process during which phyB reverts from the active to the inactive state. Contributes to red (R) light-triggered photomorphogenesis. Promotes various light responses such as seed germination, hypocotyl gravitropism and chlorophyll biosynthesis, via direct interaction with PIF1 and COP1. Prevents DNA-binding ability of PIF1 to negatively regulate the expressions of its target genes. Facilitates the physical interaction between phyB and PIF1 and the subsequent light-induced degradation of PIF1. This is Protein PHOTOPERIODIC CONTROL OF HYPOCOTYL 1-LIKE from Arabidopsis thaliana (Mouse-ear cress).